A 456-amino-acid polypeptide reads, in one-letter code: Bifunctional protein GlmU (456 aa).

The segment at 1-229 (MTKKALSAVI…VMEVEGANNR (229 aa)) is pyrophosphorylase. Residues 11 to 14 (LAAG), Lys25, Gln76, 81 to 82 (GT), 103 to 105 (YGD), Gly140, Glu154, Asn169, and Asn227 contribute to the UDP-N-acetyl-alpha-D-glucosamine site. Residue Asp105 coordinates Mg(2+). Mg(2+) is bound at residue Asn227. The segment at 230 to 250 (LQLAALERYFQNKQASKLLLE) is linker. The segment at 251–456 (GVMIYDPARF…QGWQRPIKKK (206 aa)) is N-acetyltransferase. Residues Arg333 and Lys351 each contribute to the UDP-N-acetyl-alpha-D-glucosamine site. Residue His363 is the Proton acceptor of the active site. Positions 366 and 377 each coordinate UDP-N-acetyl-alpha-D-glucosamine. Residues Ala380, 386–387 (NY), Ser405, Ala423, and Arg440 each bind acetyl-CoA.

In the N-terminal section; belongs to the N-acetylglucosamine-1-phosphate uridyltransferase family. It in the C-terminal section; belongs to the transferase hexapeptide repeat family. As to quaternary structure, homotrimer. Mg(2+) serves as cofactor.

Its subcellular location is the cytoplasm. The catalysed reaction is alpha-D-glucosamine 1-phosphate + acetyl-CoA = N-acetyl-alpha-D-glucosamine 1-phosphate + CoA + H(+). The enzyme catalyses N-acetyl-alpha-D-glucosamine 1-phosphate + UTP + H(+) = UDP-N-acetyl-alpha-D-glucosamine + diphosphate. It participates in nucleotide-sugar biosynthesis; UDP-N-acetyl-alpha-D-glucosamine biosynthesis; N-acetyl-alpha-D-glucosamine 1-phosphate from alpha-D-glucosamine 6-phosphate (route II): step 2/2. Its pathway is nucleotide-sugar biosynthesis; UDP-N-acetyl-alpha-D-glucosamine biosynthesis; UDP-N-acetyl-alpha-D-glucosamine from N-acetyl-alpha-D-glucosamine 1-phosphate: step 1/1. It functions in the pathway bacterial outer membrane biogenesis; LPS lipid A biosynthesis. In terms of biological role, catalyzes the last two sequential reactions in the de novo biosynthetic pathway for UDP-N-acetylglucosamine (UDP-GlcNAc). The C-terminal domain catalyzes the transfer of acetyl group from acetyl coenzyme A to glucosamine-1-phosphate (GlcN-1-P) to produce N-acetylglucosamine-1-phosphate (GlcNAc-1-P), which is converted into UDP-GlcNAc by the transfer of uridine 5-monophosphate (from uridine 5-triphosphate), a reaction catalyzed by the N-terminal domain. This chain is Bifunctional protein GlmU, found in Haemophilus influenzae (strain ATCC 51907 / DSM 11121 / KW20 / Rd).